Consider the following 302-residue polypeptide: Haloalkane dehalogenase (302 aa).

The region spanning 48 to 152 is the AB hydrolase-1 domain; that stretch reads PILLMHGEPS…VVVSNTGLPI (105 aa). Asp-123 (nucleophile) is an active-site residue. Asp-249 (proton donor) is an active-site residue. The Proton acceptor role is filled by His-278.

Belongs to the haloalkane dehalogenase family. Type 1 subfamily. Monomer.

The catalysed reaction is 1-haloalkane + H2O = a halide anion + a primary alcohol + H(+). Functionally, catalyzes hydrolytic cleavage of carbon-halogen bonds in halogenated aliphatic compounds, leading to the formation of the corresponding primary alcohols, halide ions and protons. This is Haloalkane dehalogenase from Caulobacter vibrioides (strain ATCC 19089 / CIP 103742 / CB 15) (Caulobacter crescentus).